The sequence spans 284 residues: Homeobox protein Hox-D13 (284 aa).

The segment at residues 217 to 276 (GRKKRVPYTKTQLKELEREYATNKFITKEKRRRISTATNLTERQVTIWFQNRRVKEKKVV) is a DNA-binding region (homeobox).

Belongs to the Abd-B homeobox family.

The protein localises to the nucleus. In terms of biological role, sequence-specific transcription factor that binds gene promoters and activates their transcription. Part of a developmental regulatory system that provides cells with specific positional identities on the anterior-posterior axis. The chain is Homeobox protein Hox-D13 (HOXD13) from Heterodontus francisci (Horn shark).